The sequence spans 594 residues: Dictomallein-4 (594 aa).

The first 18 residues, 1 to 18 (MKLVLIFLIINFLLIINC), serve as a signal peptide directing secretion. Residues 147–408 (PDVSQDYTLK…QNYFKNSIYY (262 aa)) enclose the Peptidase M66 domain. His-300 lines the Zn(2+) pocket. Residue Glu-301 is part of the active site. The Zn(2+) site is built by His-304 and His-310.

This sequence belongs to the dictomallein family. Zn(2+) serves as cofactor.

The protein resides in the secreted. The protein is Dictomallein-4 (dtmlD) of Dictyostelium discoideum (Social amoeba).